A 121-amino-acid polypeptide reads, in one-letter code: Large ribosomal subunit protein bL12 (121 aa).

This sequence belongs to the bacterial ribosomal protein bL12 family. As to quaternary structure, homodimer. Part of the ribosomal stalk of the 50S ribosomal subunit. Forms a multimeric L10(L12)X complex, where L10 forms an elongated spine to which 2 to 4 L12 dimers bind in a sequential fashion. Binds GTP-bound translation factors.

In terms of biological role, forms part of the ribosomal stalk which helps the ribosome interact with GTP-bound translation factors. Is thus essential for accurate translation. This Aliivibrio salmonicida (strain LFI1238) (Vibrio salmonicida (strain LFI1238)) protein is Large ribosomal subunit protein bL12.